The chain runs to 221 residues: MAAAVRMNIQMLLEAADYLERREREAEHGYASMLPYNNKDRDALKRRNKSKKNNSSSRSTHNEMEKNRRAHLRLCLEKLKGLVPLGPESSRHTTLSLLTKAKLHIKKLEDCDRKAVHQIDQLQREQRHLKRQLEKLGIERIRMDSIGSTVSSERSDSDREEIDVDVESTDYLTGDLDWSSSSVSDSDERGSMQSLGSDEGYSSTSIKRIKLQDSHKACLGL.

A Nuclear localization signal motif is present at residues 21-49 (RREREAEHGYASMLPYNNKDRDALKRRNK). Disordered stretches follow at residues 30-68 (YASMLPYNNKDRDALKRRNKSKKNNSSSRSTHNEMEKNR) and 173-204 (TGDLDWSSSSVSDSDERGSMQSLGSDEGYSST). The bHLH domain maps to 56–108 (SSRSTHNEMEKNRRAHLRLCLEKLKGLVPLGPESSRHTTLSLLTKAKLHIKKL). The span at 175–184 (DLDWSSSSVS) shows a compositional bias: low complexity. The segment covering 191-204 (SMQSLGSDEGYSST) has biased composition (polar residues).

Heterodimer with MAX; the interaction is required for DNA-binding. DNA binding requires dimerization with another bHLH protein; does not form homodimers, and does not bind to DNA in the absence of MAX in vitro. Interacts with RNF17. In terms of processing, ubiquitinated by BIRC2/c-IAP1, leading to its subsequent degradation by the proteasome.

Its subcellular location is the nucleus. Its function is as follows. Component of a transcriptional repressor complex together with MAX. In complex with MAX binds to the core DNA sequence 5'-CAC[GA]TG-3'. Antagonizes MYC transcriptional activity by competing with MYC for MAX binding. Binds to the TERT promoter and represses telomerase expression, possibly by interfering with MYC binding. This chain is Max dimerization protein 1 (MXD1), found in Homo sapiens (Human).